Consider the following 599-residue polypeptide: Translation initiation factor IF-2 (599 aa).

The region spanning 111–278 (PRPPIITVMG…SILLLAEILE (168 aa)) is the tr-type G domain. Positions 120-127 (GHVDHGKT) are G1. Residue 120 to 127 (GHVDHGKT) participates in GTP binding. Residues 145–149 (GITQH) form a G2 region. Positions 166–169 (DTPG) are G3. GTP contacts are provided by residues 166–170 (DTPGH) and 220–223 (NKMD). Positions 220–223 (NKMD) are G4. Residues 256–258 (SAL) form a G5 region.

The protein belongs to the TRAFAC class translation factor GTPase superfamily. Classic translation factor GTPase family. IF-2 subfamily.

It localises to the cytoplasm. One of the essential components for the initiation of protein synthesis. Protects formylmethionyl-tRNA from spontaneous hydrolysis and promotes its binding to the 30S ribosomal subunits. Also involved in the hydrolysis of GTP during the formation of the 70S ribosomal complex. In Mesomycoplasma hyopneumoniae (strain 7448) (Mycoplasma hyopneumoniae), this protein is Translation initiation factor IF-2.